The primary structure comprises 243 residues: Tetraspanin-36 (243 aa).

Over 1-9 (MDCGIITSK) the chain is Cytoplasmic. Residues 10-30 (TILLLLSLIFWAAGAALAYVG) form a helical membrane-spanning segment. Residues 31–49 (SYVIKSYNNFEDFMSDRHT) are Lumenal-facing. The helical transmembrane segment at 50–70 (LIPAAIIIGVAVVMFIIGFVG) threads the bilayer. Residues 71-84 (CCATLRESKVGLGL) lie on the Cytoplasmic side of the membrane. Residues 85–105 (FLIIIMLIFAAEVTAFVFGII) traverse the membrane as a helical segment. Topologically, residues 106 to 208 (YRGRIRGDLE…QVLQDVLSYA (103 aa)) are lumenal. 3 N-linked (GlcNAc...) asparagine glycosylation sites follow: asparagine 149, asparagine 163, and asparagine 174. A helical transmembrane segment spans residues 209–229 (MLVILGFAIIKFFGMLSVCVI). Residues 230–243 (TCKSKKNEYQPLYA) are Cytoplasmic-facing.

The protein belongs to the tetraspanin (TM4SF) family. Post-translationally, N-glycosylated. In terms of tissue distribution, strongly expressed in melanophores and xanthophores. Also detected in eye, brain, heart, skin, fin, testis and ovary.

The protein resides in the golgi apparatus membrane. Its subcellular location is the endoplasmic reticulum membrane. Functionally, plays a role in migration and segregation of pigment cells (melanophores and xanthophores). Contributes to pigment stripe patterning in the epidermis. The chain is Tetraspanin-36 from Danio rerio (Zebrafish).